The sequence spans 973 residues: Leucine--tRNA ligase, chloroplastic/mitochondrial (973 aa).

Positions Pro126–His135 match the 'HIGH' region motif. The 'KMSKS' region motif lies at Lys730–Ser734. Position 733 (Lys733) interacts with ATP.

The protein belongs to the class-I aminoacyl-tRNA synthetase family.

It is found in the plastid. It localises to the chloroplast. Its subcellular location is the mitochondrion. The catalysed reaction is tRNA(Leu) + L-leucine + ATP = L-leucyl-tRNA(Leu) + AMP + diphosphate. Its function is as follows. Catalyzes the specific attachment of an amino acid to its cognate tRNA in a two step reaction: the amino acid (AA) is first activated by ATP to form AA-AMP and then transferred to the acceptor end of the tRNA. The polypeptide is Leucine--tRNA ligase, chloroplastic/mitochondrial (Arabidopsis thaliana (Mouse-ear cress)).